Here is a 197-residue protein sequence, read N- to C-terminus: Putative protein N5-glutamine methyltransferase MJ0928 (197 aa).

Residues 42 to 46, aspartate 64, and asparagine 105 contribute to the S-adenosyl-L-methionine site; that span reads GVGTG. 105-108 lines the substrate pocket; it reads NPPY.

The protein belongs to the eukaryotic/archaeal PrmC-related family.

The enzyme catalyses L-glutaminyl-[protein] + S-adenosyl-L-methionine = N(5)-methyl-L-glutaminyl-[protein] + S-adenosyl-L-homocysteine + H(+). In terms of biological role, putative protein methyltransferase using S-adenosyl-L-methionine as the methyl donor. May methylate a Gln residue in target proteins. This is Putative protein N5-glutamine methyltransferase MJ0928 from Methanocaldococcus jannaschii (strain ATCC 43067 / DSM 2661 / JAL-1 / JCM 10045 / NBRC 100440) (Methanococcus jannaschii).